The following is a 247-amino-acid chain: Adenosylcobinamide-GDP ribazoletransferase (247 aa).

5 consecutive transmembrane segments (helical) span residues 1-21, 37-57, 61-81, 109-129, and 176-196; these read MLRLYFVALQFLAIIPIPFSF, LVGLTLGLLLAGCDYLLALAL, VADLLLVAILALVTGALHLDG, AVGVVGLVLALLLKYQALFAV, and VAVAAFFTVVTGWLLLGLPGI.

It belongs to the CobS family. The cofactor is Mg(2+).

It localises to the cell inner membrane. The enzyme catalyses alpha-ribazole + adenosylcob(III)inamide-GDP = adenosylcob(III)alamin + GMP + H(+). It catalyses the reaction alpha-ribazole 5'-phosphate + adenosylcob(III)inamide-GDP = adenosylcob(III)alamin 5'-phosphate + GMP + H(+). It functions in the pathway cofactor biosynthesis; adenosylcobalamin biosynthesis; adenosylcobalamin from cob(II)yrinate a,c-diamide: step 7/7. Its function is as follows. Joins adenosylcobinamide-GDP and alpha-ribazole to generate adenosylcobalamin (Ado-cobalamin). Also synthesizes adenosylcobalamin 5'-phosphate from adenosylcobinamide-GDP and alpha-ribazole 5'-phosphate. The polypeptide is Adenosylcobinamide-GDP ribazoletransferase (Geotalea daltonii (strain DSM 22248 / JCM 15807 / FRC-32) (Geobacter daltonii)).